We begin with the raw amino-acid sequence, 355 residues long: Ubiquinone biosynthesis protein COQ4 homolog, mitochondrial (355 aa).

Zn(2+) is bound by residues His134, Asp135, His138, and Glu150.

Belongs to the COQ4 family. Component of a multi-subunit COQ enzyme complex. Zn(2+) serves as cofactor.

It is found in the mitochondrion inner membrane. It catalyses the reaction a 4-hydroxy-3-methoxy-5-(all-trans-polyprenyl)benzoate + H(+) = a 2-methoxy-6-(all-trans-polyprenyl)phenol + CO2. The protein operates within cofactor biosynthesis; ubiquinone biosynthesis. Lyase that catalyzes the C1-decarboxylation of 4-hydroxy-3-methoxy-5-(all-trans-polyprenyl)benzoic acid into 2-methoxy-6-(all-trans-polyprenyl)phenol during ubiquinone biosynthesis. The protein is Ubiquinone biosynthesis protein COQ4 homolog, mitochondrial of Plasmodium yoelii yoelii.